A 147-amino-acid chain; its full sequence is Ribonuclease H (147 aa).

Residues 1-142 (MREVIIYTDG…CDELARAAIA (142 aa)) form the RNase H type-1 domain. The Mg(2+) site is built by Asp-9, Glu-47, Asp-69, and Asp-134.

It belongs to the RNase H family. In terms of assembly, monomer. Mg(2+) serves as cofactor.

It localises to the cytoplasm. It catalyses the reaction Endonucleolytic cleavage to 5'-phosphomonoester.. In terms of biological role, endonuclease that specifically degrades the RNA of RNA-DNA hybrids. This Symbiobacterium thermophilum (strain DSM 24528 / JCM 14929 / IAM 14863 / T) protein is Ribonuclease H.